Reading from the N-terminus, the 494-residue chain is GTPase Der (494 aa).

2 consecutive EngA-type G domains span residues 3–166 (PVVA…VGEK) and 208–381 (IKLA…ECAT). GTP contacts are provided by residues 9–16 (GRPNVGKS), 56–60 (DTGGI), 118–121 (NKTD), 214–221 (GRPNVGKS), 261–265 (DTAGV), and 326–329 (NKWD). In terms of domain architecture, KH-like spans 382–466 (RRVNTSMLTK…PIRIQFKEGE (85 aa)).

This sequence belongs to the TRAFAC class TrmE-Era-EngA-EngB-Septin-like GTPase superfamily. EngA (Der) GTPase family. As to quaternary structure, associates with the 50S ribosomal subunit.

In terms of biological role, GTPase that plays an essential role in the late steps of ribosome biogenesis. The protein is GTPase Der of Serratia proteamaculans (strain 568).